Consider the following 235-residue polypeptide: Segregation and condensation protein A (235 aa).

It belongs to the ScpA family. Component of a cohesin-like complex composed of ScpA, ScpB and the Smc homodimer, in which ScpA and ScpB bind to the head domain of Smc. The presence of the three proteins is required for the association of the complex with DNA.

The protein localises to the cytoplasm. Its function is as follows. Participates in chromosomal partition during cell division. May act via the formation of a condensin-like complex containing Smc and ScpB that pull DNA away from mid-cell into both cell halves. The chain is Segregation and condensation protein A from Streptococcus equi subsp. zooepidemicus (strain H70).